We begin with the raw amino-acid sequence, 148 residues long: Large ribosomal subunit protein bL9 (148 aa).

It belongs to the bacterial ribosomal protein bL9 family.

Functionally, binds to the 23S rRNA. This Bacillus thuringiensis subsp. konkukian (strain 97-27) protein is Large ribosomal subunit protein bL9.